Here is a 102-residue protein sequence, read N- to C-terminus: Outer membrane protein assembly factor BamE (102 aa).

An N-terminal signal peptide occupies residues 1–20; sequence MNNYIKALLIIICFSSCSIS.

Belongs to the BamE family. As to quaternary structure, part of the Bam complex.

The protein resides in the cell outer membrane. Its function is as follows. Part of the outer membrane protein assembly complex, which is involved in assembly and insertion of beta-barrel proteins into the outer membrane. The polypeptide is Outer membrane protein assembly factor BamE (Buchnera aphidicola subsp. Acyrthosiphon pisum (strain APS) (Acyrthosiphon pisum symbiotic bacterium)).